Here is a 458-residue protein sequence, read N- to C-terminus: Adenylosuccinate synthetase (458 aa).

GTP contacts are provided by residues 11–17 (GDEGKGG) and 39–41 (GHT). D12 (proton acceptor) is an active-site residue. Residues D12 and G39 each contribute to the Mg(2+) site. IMP is bound by residues 12-15 (DEGK), 37-40 (NAGH), T127, R141, Q232, T247, and R330. H40 (proton donor) is an active-site residue. Residue 326-332 (TVTGRPR) coordinates substrate. Residues R332, 358 to 360 (HLD), and 443 to 445 (GVG) contribute to the GTP site.

Belongs to the adenylosuccinate synthetase family. Homodimer. The cofactor is Mg(2+).

The protein localises to the cytoplasm. The enzyme catalyses IMP + L-aspartate + GTP = N(6)-(1,2-dicarboxyethyl)-AMP + GDP + phosphate + 2 H(+). It participates in purine metabolism; AMP biosynthesis via de novo pathway; AMP from IMP: step 1/2. Plays an important role in the de novo pathway of purine nucleotide biosynthesis. Catalyzes the first committed step in the biosynthesis of AMP from IMP. The chain is Adenylosuccinate synthetase from Haloarcula marismortui (strain ATCC 43049 / DSM 3752 / JCM 8966 / VKM B-1809) (Halobacterium marismortui).